Consider the following 314-residue polypeptide: Acetyl-coenzyme A carboxylase carboxyl transferase subunit beta (314 aa).

In terms of domain architecture, CoA carboxyltransferase N-terminal spans 44–311 (LMNKCPHCGT…VETWQASSPL (268 aa)). Zn(2+) is bound by residues C48, C51, C67, and C70. The segment at 48–70 (CPHCGTIHYSKDLEKNLRVCKGC) adopts a C4-type zinc-finger fold.

It belongs to the AccD/PCCB family. Acetyl-CoA carboxylase is a heterohexamer composed of biotin carboxyl carrier protein (AccB), biotin carboxylase (AccC) and two subunits each of ACCase subunit alpha (AccA) and ACCase subunit beta (AccD). Zn(2+) serves as cofactor.

The protein resides in the cytoplasm. The enzyme catalyses N(6)-carboxybiotinyl-L-lysyl-[protein] + acetyl-CoA = N(6)-biotinyl-L-lysyl-[protein] + malonyl-CoA. It participates in lipid metabolism; malonyl-CoA biosynthesis; malonyl-CoA from acetyl-CoA: step 1/1. Functionally, component of the acetyl coenzyme A carboxylase (ACC) complex. Biotin carboxylase (BC) catalyzes the carboxylation of biotin on its carrier protein (BCCP) and then the CO(2) group is transferred by the transcarboxylase to acetyl-CoA to form malonyl-CoA. This is Acetyl-coenzyme A carboxylase carboxyl transferase subunit beta from Brevibacillus brevis (strain 47 / JCM 6285 / NBRC 100599).